Reading from the N-terminus, the 63-residue chain is Large ribosomal subunit protein bL28 (63 aa).

It belongs to the bacterial ribosomal protein bL28 family.

The chain is Large ribosomal subunit protein bL28 from Desulfosudis oleivorans (strain DSM 6200 / JCM 39069 / Hxd3) (Desulfococcus oleovorans).